Consider the following 301-residue polypeptide: Chitosanase (301 aa).

The N-terminal stretch at 1–42 (MHMSNARPSKSRTKFLLAFLCFTLMASLFGATALFGPSKAAA) is a signal peptide. The Proton donor role is filled by glutamate 79. A disulfide bridge connects residues cysteine 92 and cysteine 166. The Nucleophile role is filled by aspartate 97.

The protein belongs to the glycosyl hydrolase 46 family.

The protein localises to the secreted. The enzyme catalyses Endohydrolysis of beta-(1-&gt;4)-linkages between D-glucosamine residues in a partly acetylated chitosan.. In terms of biological role, aids in the defense against invading fungal pathogens by degrading their cell wall chitosan. This is Chitosanase (csn) from Niallia circulans (Bacillus circulans).